Here is a 433-residue protein sequence, read N- to C-terminus: Adenylosuccinate synthetase (433 aa).

GTP contacts are provided by residues 11–17 (GDEGKGK) and 39–41 (GHT). The active-site Proton acceptor is Asp12. Mg(2+)-binding residues include Asp12 and Gly39. IMP-binding positions include 12-15 (DEGK), 37-40 (NAGH), Thr134, Arg148, Asn230, Thr245, and Arg309. His40 acts as the Proton donor in catalysis. 305-311 (VTTGRKR) lines the substrate pocket. GTP contacts are provided by residues Arg311, 337 to 339 (KLD), and 419 to 421 (GTG).

It belongs to the adenylosuccinate synthetase family. Homodimer. It depends on Mg(2+) as a cofactor.

Its subcellular location is the cytoplasm. The enzyme catalyses IMP + L-aspartate + GTP = N(6)-(1,2-dicarboxyethyl)-AMP + GDP + phosphate + 2 H(+). It participates in purine metabolism; AMP biosynthesis via de novo pathway; AMP from IMP: step 1/2. Functionally, plays an important role in the de novo pathway and in the salvage pathway of purine nucleotide biosynthesis. Catalyzes the first committed step in the biosynthesis of AMP from IMP. This is Adenylosuccinate synthetase from Saccharomyces cerevisiae (strain AWRI1631) (Baker's yeast).